A 217-amino-acid chain; its full sequence is Cytidylate kinase (217 aa).

9-17 (GPAGSGKTT) is a binding site for ATP.

The protein belongs to the cytidylate kinase family. Type 1 subfamily.

The protein localises to the cytoplasm. It catalyses the reaction CMP + ATP = CDP + ADP. The enzyme catalyses dCMP + ATP = dCDP + ADP. The protein is Cytidylate kinase of Thermosipho melanesiensis (strain DSM 12029 / CIP 104789 / BI429).